A 219-amino-acid chain; its full sequence is Pyridoxal 5'-phosphate synthase subunit PDX2 (219 aa).

52 to 54 (GES) provides a ligand contact to L-glutamine. Residue Cys-87 is the Nucleophile of the active site. Residues Arg-121 and 153–154 (IR) contribute to the L-glutamine site. Active-site charge relay system residues include His-196 and Glu-198.

It belongs to the glutaminase PdxT/SNO family. In terms of assembly, in the presence of Pdx1, forms a dodecamer of heterodimers. Only shows activity in the heterodimer.

Its subcellular location is the cytoplasm. It carries out the reaction aldehydo-D-ribose 5-phosphate + D-glyceraldehyde 3-phosphate + L-glutamine = pyridoxal 5'-phosphate + L-glutamate + phosphate + 3 H2O + H(+). The enzyme catalyses L-glutamine + H2O = L-glutamate + NH4(+). It participates in cofactor biosynthesis; pyridoxal 5'-phosphate biosynthesis. Functionally, catalyzes the hydrolysis of glutamine to glutamate and ammonia as part of the biosynthesis of pyridoxal 5'-phosphate. The resulting ammonia molecule is channeled to the active site of Pdx1. This is Pyridoxal 5'-phosphate synthase subunit PDX2 from Plasmodium falciparum (isolate 3D7).